Here is a 396-residue protein sequence, read N- to C-terminus: Elongation factor Tu 2 (396 aa).

The region spanning 10–206 is the tr-type G domain; the sequence is KPHINVGTIG…AMDAHIPQPE (197 aa). The segment at 19-26 is G1; sequence GHVDHGKT. A GTP-binding site is contributed by 19–26; the sequence is GHVDHGKT. Mg(2+) is bound at residue Thr26. A G2 region spans residues 60 to 64; the sequence is GITIA. The G3 stretch occupies residues 81–84; sequence DCPG. GTP-binding positions include 81–85 and 136–139; these read DCPGH and NKAD. The interval 136-139 is G4; the sequence is NKAD. Positions 174-176 are G5; it reads SAL.

This sequence belongs to the TRAFAC class translation factor GTPase superfamily. Classic translation factor GTPase family. EF-Tu/EF-1A subfamily. Monomer.

It is found in the cytoplasm. The catalysed reaction is GTP + H2O = GDP + phosphate + H(+). Its function is as follows. GTP hydrolase that promotes the GTP-dependent binding of aminoacyl-tRNA to the A-site of ribosomes during protein biosynthesis. In Halorhodospira halophila (strain DSM 244 / SL1) (Ectothiorhodospira halophila (strain DSM 244 / SL1)), this protein is Elongation factor Tu 2.